The chain runs to 308 residues: MAVQAPCIQLNDGNTIPIVALGTGRGTAKESDSIDEVRQAVYWAIEAGYRHIDTAAVYQDEEQVGQGIAEAIANGLVTREELFVTTKLWNDKHARDQVVPALQESLKKLGLDYIDLYLIHFPIATKPDDSPDNIDYLETWQGMQDARQLGLARSIGVSNFNATQITRLVSNSYIRPVINQIEVNPTNTQEPLVAHCQSLGIAVMAYSPFGFVVSRGQTGAPPPRSDDPTLTALANKYRKSVGQILLRYLIDRGLIPIPKSTNKQRIAQNIDLFDFQLTFEEVAAINQFNKNHRVIDISDWKDYPNYPN.

Residues 22–29 and Asp53 each bind NADP(+); that span reads GTGRGTAK. The active-site Proton donor is the Tyr58. NADP(+)-binding positions include 158 to 159, Arg215, and 259 to 269; these read SN and KSTNKQRIAQN.

Belongs to the short-chain dehydrogenases/reductases (SDR) family. In terms of tissue distribution, detected in hemolymph (at protein level). Detected in larval ovary.

With respect to regulation, subject to substrate inhibition by high levels of 3-dehydroecdysone. In terms of biological role, NADP-dependent oxidoreductase with high 3-dehydroecdysone reductase activity. May play a role in the regulation of molting. Has lower activity with phenylglyoxal and isatin (in vitro). Has no activity with NADH as cosubstrate. Has no activity with nitrobenzaldehyde and 3-hydroxybenzaldehyde. The protein is Aldo-keto reductase AKR2E4 (akr2e) of Bombyx mori (Silk moth).